The sequence spans 574 residues: MALHQFDYIFAIAMLFAFLDAFNIGANDVANSFASSISSRSLKYWQAMVLAGLCEFLGAVLAGARVSGTIKNNIIDSSIFTNDPAVLMLTMTSALIGSSCWLTFATAIGMPVSTTHSIVGGTIGAGIAAGGANGVVWGWSGVSQIIASWFIAPILAGAIAAIVFSISRFSVLEVKSLERSIKNALLLVGVLVFATFSILTMLIVWKGSPNLHLDDLSETETAVSIVLTGAIASIVYFIFFYPFYRRKVLDQDWTLKLIDIFRGPSFYFKSTDDIPPMPEGHQLTIDYYEGRRNLGTTVSVEDEENKAASNSNDSVKNKEDIQEVDLVRTETEPETKLSTKQYWWSLLKQGPKKWPLLFWLVISHGWTQDVIHAQVNDRDMLSGDLKGMYERSKFYDNRVEYIYSVLQAITAATMSFAHGANDVANATGPLSAVYVIWKTNTIGAKSEVPVWVLAYGGVALVIGCWTYGYNIIKNLGNKMILQSPSRGFSIELAVAITTVMATQLGIPTSTTQIAVGGIVAVGLCNKDLKSVNWRMVAWCYSGWFLTLPIAGLIAGIINGIILNAPRFGVEYQMT.

The Extracellular segment spans residues 1-5 (MALHQ). A helical membrane pass occupies residues 6 to 26 (FDYIFAIAMLFAFLDAFNIGA). The Cytoplasmic portion of the chain corresponds to 27–43 (NDVANSFASSISSRSLK). The chain crosses the membrane as a helical span at residues 44–64 (YWQAMVLAGLCEFLGAVLAGA). Over 65-84 (RVSGTIKNNIIDSSIFTNDP) the chain is Extracellular. Residues 85–105 (AVLMLTMTSALIGSSCWLTFA) traverse the membrane as a helical segment. Residues 106–117 (TAIGMPVSTTHS) are Cytoplasmic-facing. Residues 118-138 (IVGGTIGAGIAAGGANGVVWG) form a helical membrane-spanning segment. Topologically, residues 139–145 (WSGVSQI) are extracellular. The chain crosses the membrane as a helical span at residues 146-166 (IASWFIAPILAGAIAAIVFSI). The Cytoplasmic portion of the chain corresponds to 167–184 (SRFSVLEVKSLERSIKNA). A helical transmembrane segment spans residues 185-205 (LLLVGVLVFATFSILTMLIVW). The Extracellular portion of the chain corresponds to 206–222 (KGSPNLHLDDLSETETA). A helical transmembrane segment spans residues 223–243 (VSIVLTGAIASIVYFIFFYPF). Residues 244–354 (YRRKVLDQDW…SLLKQGPKKW (111 aa)) are Cytoplasmic-facing. The disordered stretch occupies residues 301–332 (EDEENKAASNSNDSVKNKEDIQEVDLVRTETE). Positions 315–332 (VKNKEDIQEVDLVRTETE) are enriched in basic and acidic residues. Residues 355–375 (PLLFWLVISHGWTQDVIHAQV) form a helical membrane-spanning segment. Residues 376–398 (NDRDMLSGDLKGMYERSKFYDNR) lie on the Extracellular side of the membrane. Residues 399 to 419 (VEYIYSVLQAITAATMSFAHG) traverse the membrane as a helical segment. Topologically, residues 420 to 447 (ANDVANATGPLSAVYVIWKTNTIGAKSE) are cytoplasmic. A helical transmembrane segment spans residues 448-468 (VPVWVLAYGGVALVIGCWTYG). The Extracellular segment spans residues 469–503 (YNIIKNLGNKMILQSPSRGFSIELAVAITTVMATQ). A helical membrane pass occupies residues 504–524 (LGIPTSTTQIAVGGIVAVGLC). The Cytoplasmic portion of the chain corresponds to 525–541 (NKDLKSVNWRMVAWCYS). Residues 542-562 (GWFLTLPIAGLIAGIINGIIL) traverse the membrane as a helical segment. Topologically, residues 563–574 (NAPRFGVEYQMT) are extracellular.

It belongs to the inorganic phosphate transporter (PiT) (TC 2.A.20) family. As to quaternary structure, forms homodimers and higher order homooligomers.

The protein resides in the cell membrane. It catalyses the reaction 2 Na(+)(out) + phosphate(out) = 2 Na(+)(in) + phosphate(in). With respect to regulation, weakly stimulated by Li(+) and K(+). Inhibited by monensin. Inhibited by phosphonoacetic acid. Inhibited by methylphosphonate. Inhibited by dimethylphosphonate. In terms of biological role, sodium-phosphate symporter. Active in early growth phase. The polypeptide is Phosphate permease PHO89 (PHO89) (Saccharomyces cerevisiae (strain ATCC 204508 / S288c) (Baker's yeast)).